A 257-amino-acid polypeptide reads, in one-letter code: Pimeloyl-[acyl-carrier protein] methyl ester esterase (257 aa).

An AB hydrolase-1 domain is found at 15–241 (HLVLLHGWGL…KAAHAPFVSH (227 aa)). Residues Trp22, 82–83 (SL), and 143–147 (FLALQ) each bind substrate. The Nucleophile role is filled by Ser82. Residues Asp207 and His235 contribute to the active site. His235 contacts substrate.

Belongs to the AB hydrolase superfamily. Carboxylesterase BioH family. As to quaternary structure, monomer.

Its subcellular location is the cytoplasm. It catalyses the reaction 6-carboxyhexanoyl-[ACP] methyl ester + H2O = 6-carboxyhexanoyl-[ACP] + methanol + H(+). The protein operates within cofactor biosynthesis; biotin biosynthesis. In terms of biological role, the physiological role of BioH is to remove the methyl group introduced by BioC when the pimeloyl moiety is complete. It allows to synthesize pimeloyl-ACP via the fatty acid synthetic pathway through the hydrolysis of the ester bonds of pimeloyl-ACP esters. The sequence is that of Pimeloyl-[acyl-carrier protein] methyl ester esterase from Klebsiella pneumoniae (strain 342).